We begin with the raw amino-acid sequence, 662 residues long: Probable quinol oxidase subunit 1 (662 aa).

The next 2 helical transmembrane spans lie at 14 to 34 (WMIISAQIAAPFLVIGLIAVI) and 56 to 76 (IGIMYLISAVLMFVRGGIDAL). His102 is a Fe(II)-heme a binding site. The next 8 membrane-spanning stretches (helical) occupy residues 103–123 (GVIMIIFMAMPFIFGLWNVVI), 140–160 (VSFWLFFAGMILFNLSFIVGG), 187–207 (IAIQISGIGSLMTGINFFVTI), 228–248 (FITTLIVILAFPVFTVALALM), 273–293 (FFWVWGHPEVYIVILPAFGMY), 311–331 (MIWATAGIAFLSFLVWVHHFF), 336–356 (GALINSFFSISTMLIGVPTGV), and 376–396 (MLFSLAFIPNFLLGGVTGVML). Cu cation is bound by residues His279, Tyr283, His328, and His329. Positions 279–283 (HPEVY) form a cross-link, 1'-histidyl-3'-tyrosine (His-Tyr). His414 serves as a coordination point for heme a3. Helical transmembrane passes span 415-435 (FHYTLVTGVVFACLAGLIFWY), 451-471 (CFWFFMIGFNVCFLPQFILGL), 492-512 (FISTIGAVLMAIGFLFLVASI), 587-604 (PVGFWMGIFMTIGGFFLI), and 608-627 (IVPALICLAGIFITMIWRSF). Fe(II)-heme a is bound at residue His416.

The protein belongs to the heme-copper respiratory oxidase family. It depends on Cu cation as a cofactor. Ferriheme a is required as a cofactor. Heme A3. serves as cofactor.

It localises to the cell membrane. The enzyme catalyses 2 a quinol + O2 = 2 a quinone + 2 H2O. The protein operates within energy metabolism; oxidative phosphorylation. In terms of biological role, catalyzes quinol oxidation with the concomitant reduction of oxygen to water. The protein is Probable quinol oxidase subunit 1 (qoxB) of Staphylococcus epidermidis (strain ATCC 35984 / DSM 28319 / BCRC 17069 / CCUG 31568 / BM 3577 / RP62A).